Here is a 31-residue protein sequence, read N- to C-terminus: Jingzhaotoxin F7-15.33 (31 aa).

Disulfide bonds link Cys-2–Cys-16, Cys-9–Cys-21, and Cys-15–Cys-28.

The protein belongs to the neurotoxin 10 (Hwtx-1) family. As to expression, expressed by the venom gland.

It is found in the secreted. Its function is as follows. Probable ion channel inhibitor. The protein is Jingzhaotoxin F7-15.33 of Chilobrachys guangxiensis (Chinese earth tiger tarantula).